The primary structure comprises 369 residues: Endophilin-A (369 aa).

In terms of domain architecture, BAR spans 18–248; the sequence is TEKMGGAEGT…LQEKRAEAES (231 aa). Residues 227–249 are a coiled coil; the sequence is QCADVLRGLQETLQEKRAEAESR. Residues 275-294 are compositionally biased toward low complexity; sequence GTPSHISSSASPLPSPMRSP. The tract at residues 275–297 is disordered; it reads GTPSHISSSASPLPSPMRSPAKS. The 60-residue stretch at 305–364 folds into the SH3 domain; it reads QQQPCCQALYDFDPENPGELGFKENDIITLLNRVDDNWYEGAVNGRTGYFPQSYVQVQVP.

It belongs to the endophilin family.

Its subcellular location is the cytoplasm. The protein localises to the membrane. Its function is as follows. Required presynaptically at the neuromuscular junction. Implicated in synaptic vesicle endocytosis. This is Endophilin-A from Drosophila virilis (Fruit fly).